The chain runs to 182 residues: tRNA-splicing endonuclease (182 aa).

Residues Tyr-119, His-127, and Lys-158 contribute to the active site.

It belongs to the tRNA-intron endonuclease family. Archaeal short subfamily. Homotetramer; although the tetramer contains four active sites, only two participate in the cleavage. Therefore, it should be considered as a dimer of dimers.

The enzyme catalyses pretRNA = a 3'-half-tRNA molecule with a 5'-OH end + a 5'-half-tRNA molecule with a 2',3'-cyclic phosphate end + an intron with a 2',3'-cyclic phosphate and a 5'-hydroxyl terminus.. Endonuclease that removes tRNA introns. Cleaves pre-tRNA at the 5'- and 3'-splice sites to release the intron. The products are an intron and two tRNA half-molecules bearing 2',3' cyclic phosphate and 5'-OH termini. Recognizes a pseudosymmetric substrate in which 2 bulged loops of 3 bases are separated by a stem of 4 bp. This Saccharolobus solfataricus (strain ATCC 35092 / DSM 1617 / JCM 11322 / P2) (Sulfolobus solfataricus) protein is tRNA-splicing endonuclease.